The primary structure comprises 327 residues: Ran-specific GTPase-activating protein 2 (327 aa).

Disordered stretches follow at residues 1–96 (MSET…KKED) and 109–205 (GFGV…KQEV). Residues 24 to 83 (PIDKLDGTPKRPREKDQDEQAEETSDKSEAPNKNDEEKKEEGKKDQEPSHKKIKVDDGKT) show a composition bias toward basic and acidic residues. Position 31 is a phosphothreonine (T31). A compositionally biased stretch (polar residues) spans 122–133 (ATTSTESLPASD). The span at 140–152 (FAFGSGLSFGSGF) shows a compositional bias: low complexity. Basic and acidic residues-rich tracts occupy residues 157–179 (NKTENNSESEKKATDVDKDKVHS) and 189–205 (EDTKDKPKPLKLQKQEV). Phosphoserine is present on S179. One can recognise a RanBD1 domain in the interval 191 to 327 (TKDKPKPLKL…YNIIVKSVPK (137 aa)).

As to quaternary structure, interacts with GSP1, XPO1 and SRM1.

It is found in the nucleus. Important for the export of protein containing nuclear export signal (NES) out of the nucleus. Stimulates the GTPase activity of GSP1. The sequence is that of Ran-specific GTPase-activating protein 2 (YRB2) from Saccharomyces cerevisiae (strain ATCC 204508 / S288c) (Baker's yeast).